Reading from the N-terminus, the 210-residue chain is MATIFDILNTLNNNNNNNNFENCKRQCPINKSNKTIIDKLPPMDVTMTNDKLIIETELAGISKDHIEIDIKDSILTIQGEKKKNLNKQQQQLVIEKSTSSSTLDSKEDEPSIEEFEDDIKPKSKSDNTTVSTTTTATTKENKEDENKTKSTDKKFISERSFGNFKRYLDLTKILYQLDLNSINTQFENGLLTITINKKLHYSNTIKININ.

The region spanning 34 to 210 (KTIIDKLPPM…YSNTIKININ (177 aa)) is the sHSP domain. The disordered stretch occupies residues 93–151 (VIEKSTSSSTLDSKEDEPSIEEFEDDIKPKSKSDNTTVSTTTTATTKENKEDENKTKST). Over residues 126-138 (DNTTVSTTTTATT) the composition is skewed to low complexity. The segment covering 139–151 (KENKEDENKTKST) has biased composition (basic and acidic residues).

This sequence belongs to the small heat shock protein (HSP20) family.

The sequence is that of Small heat shock protein hspG6 (hspG6) from Dictyostelium discoideum (Social amoeba).